Here is a 192-residue protein sequence, read N- to C-terminus: Ion-translocating oxidoreductase complex subunit A (192 aa).

A run of 6 helical transmembrane segments spans residues 5-25, 39-59, 72-92, 102-122, 134-154, and 171-191; these read LLLLIGTVLVNNFVLVKFLGL, IGMSMATTFVLTLASVLSFLV, LRTMSFILVIAVVVQFTEMLV, ALGIYLPLITTNCAVLGVALL, AIYGFGAAVGFSLVLILFSAM, and AIAMITAGLMSLAFMGFTGLV.

This sequence belongs to the NqrDE/RnfAE family. As to quaternary structure, the complex is composed of six subunits: RnfA, RnfB, RnfC, RnfD, RnfE and RnfG.

The protein localises to the cell inner membrane. Its function is as follows. Part of a membrane-bound complex that couples electron transfer with translocation of ions across the membrane. This chain is Ion-translocating oxidoreductase complex subunit A, found in Shewanella amazonensis (strain ATCC BAA-1098 / SB2B).